We begin with the raw amino-acid sequence, 306 residues long: Peroxisome biogenesis factor 10 (306 aa).

The Peroxisomal matrix portion of the chain corresponds to 1–52 (MHLSAHIDPLQIILCTEIDEACIQFIKSQIEGIARACGPRMQANFEGVLIPY). A helical membrane pass occupies residues 53-84 (VDVLGKFLYRACCLRYATMGEEAARIVLAKQD). The Cytoplasmic segment spans residues 85 to 147 (RSKGLVLATT…PEAVISKEKH (63 aa)). Residues 148–174 (LVYILNSFKPILLKLVSIIRFLCLTMK) form a helical membrane-spanning segment. Residues 175–202 (GHCATVSQLLLGLKYISLDEINPEEKKK) lie on the Peroxisomal matrix side of the membrane. Residues 203–219 (VLTLLLLLGSRLIASIL) traverse the membrane as a helical segment. Residues 220-306 (QHSNSYFDQH…SSPSKIILLR (87 aa)) are Cytoplasmic-facing. The Zn(2+) site is built by Cys256, Cys259, Cys271, His273, Cys276, Cys279, Cys290, and Cys293. The RING-type zinc-finger motif lies at 256–294 (CSLCMEFIHCPAATECGHIFCWSCINGWTSKKSECPLCR).

Belongs to the pex2/pex10/pex12 family. As to quaternary structure, component of the PEX2-PEX10-PEX12 retrotranslocation channel, composed of PEX2, PEX10 and PEX12.

It is found in the peroxisome membrane. It catalyses the reaction S-ubiquitinyl-[E2 ubiquitin-conjugating enzyme]-L-cysteine + [acceptor protein]-L-lysine = [E2 ubiquitin-conjugating enzyme]-L-cysteine + N(6)-ubiquitinyl-[acceptor protein]-L-lysine.. It functions in the pathway protein modification; protein ubiquitination. Its activity is regulated as follows. The E3 ubiquitin-protein ligase activity is stimulated by PEX12. E3 ubiquitin-protein ligase component of a retrotranslocation channel required for peroxisome organization by mediating export of the PEX5 receptor from peroxisomes to the cytosol, thereby promoting PEX5 recycling. The retrotranslocation channel is composed of PEX2, PEX10 and PEX12; each subunit contributing transmembrane segments that coassemble into an open channel that specifically allows the passage of PEX5 through the peroxisomal membrane. PEX10 also regulates PEX5 recycling by acting as a E3 ubiquitin-protein ligase. When PEX5 recycling is compromised, PEX10 catalyzes polyubiquitination of PEX5 during its passage through the retrotranslocation channel, leading to its degradation. The protein is Peroxisome biogenesis factor 10 (pas4) of Schizosaccharomyces pombe (strain 972 / ATCC 24843) (Fission yeast).